Reading from the N-terminus, the 555-residue chain is Inositol 1,4,5-trisphosphate receptor-interacting protein-like 1 (555 aa).

Residues 1-24 (MNVDAEASMAVISLLFLAVMYVVH) form the signal peptide. The Extracellular portion of the chain corresponds to 25–103 (HPLMVSDRMD…WPFQADGQEG (79 aa)). Residues 38-74 (LARSRQLEKRMSEEMRLLEMEFEERKRAAEQRQKAEN) are a coiled coil. Residues 104–124 (PLGWMLGNLWNTGLFCLFLVF) form a helical membrane-spanning segment. At 125 to 555 (ELLRQNMQHE…LPHAPLAAAP (431 aa)) the chain is on the cytoplasmic side.

It belongs to the ITPRIP family. As to expression, expressed in testis and tumoral cells.

It is found in the cell membrane. Functionally, functions as a ligand of CD3E, inhibiting TCR-CD3 complex signaling to regulate T cell activation. Induces stable CD3E-NCK1 binding, thereby preventing the CD3E-ZAP70 interaction and subsequently inhibiting the activation of the downstream ERK-NFkB signaling cascade and calcium influx. The sequence is that of Inositol 1,4,5-trisphosphate receptor-interacting protein-like 1 from Homo sapiens (Human).